The chain runs to 301 residues: Phosphatidylglycerol--prolipoprotein diacylglyceryl transferase (301 aa).

A run of 3 helical transmembrane segments spans residues 17-37, 59-79, and 97-117; these read LAVRWYGLMYLVAFIAAIVVG, MLFYGVLGTILGGRLGYVLFY, and GGMSFHGGFLGVTLAMVLFAY. Residue R142 participates in a 1,2-diacyl-sn-glycero-3-phospho-(1'-sn-glycerol) binding. 2 helical membrane passes run 230-250 and 265-285; these read MGAISAVFLIGYGLARFTVEF and LSMGQWLSLPMILVGIGLLVW.

This sequence belongs to the Lgt family.

The protein resides in the cell inner membrane. The enzyme catalyses L-cysteinyl-[prolipoprotein] + a 1,2-diacyl-sn-glycero-3-phospho-(1'-sn-glycerol) = an S-1,2-diacyl-sn-glyceryl-L-cysteinyl-[prolipoprotein] + sn-glycerol 1-phosphate + H(+). It participates in protein modification; lipoprotein biosynthesis (diacylglyceryl transfer). Catalyzes the transfer of the diacylglyceryl group from phosphatidylglycerol to the sulfhydryl group of the N-terminal cysteine of a prolipoprotein, the first step in the formation of mature lipoproteins. The protein is Phosphatidylglycerol--prolipoprotein diacylglyceryl transferase of Paraburkholderia xenovorans (strain LB400).